The sequence spans 1077 residues: Semaphorin-5A (1077 aa).

Residues 1-21 (MKGACILAWLFSSLGVWRLAR) form the signal peptide. Residues 22–971 (PETQDPAKCQ…RCGEFNMFHM (950 aa)) are Extracellular-facing. Residues 35 to 484 (HPVVSYKEIG…LQEHVAKIPL (450 aa)) form the Sema domain. 2 disulfides stabilise this stretch: Cys-104–Cys-114 and Cys-131–Cys-140. Asn-147, Asn-168, Asn-227, and Asn-277 each carry an N-linked (GlcNAc...) asparagine glycan. 2 disulfides stabilise this stretch: Cys-254-Cys-357 and Cys-278-Cys-320. 2 N-linked (GlcNAc...) asparagine glycosylation sites follow: Asn-323 and Asn-367. Intrachain disulfides connect Cys-487–Cys-504 and Cys-496–Cys-513. Residues Asn-536 and Asn-591 are each glycosylated (N-linked (GlcNAc...) asparagine). TSP type-1 domains are found at residues 540 to 593 (DGSF…TNCS), 595 to 651 (NGGW…LLCP), 653 to 702 (HVFW…NACP), 707 to 765 (TTPW…GCST), 784 to 839 (NGAW…LPCP), 841 to 896 (DGVW…QTCP), and 897 to 944 (ESWS…VFDS). Intrachain disulfides connect Cys-607-Cys-644, Cys-611-Cys-650, Cys-622-Cys-634, Cys-665-Cys-696, Cys-669-Cys-701, and Cys-680-Cys-686. Residue Asn-717 is glycosylated (N-linked (GlcNAc...) asparagine). Disulfide bonds link Cys-796/Cys-833, Cys-800/Cys-838, Cys-811/Cys-823, Cys-853/Cys-890, Cys-857/Cys-895, and Cys-868/Cys-880. N-linked (GlcNAc...) asparagine glycosylation is present at Asn-933. A helical membrane pass occupies residues 972–992 (FHMMAVGLSSSILGCLLTLLV). Over 993–1077 (YTYCQRYQQQ…FTDLNNYDEY (85 aa)) the chain is Cytoplasmic.

The protein belongs to the semaphorin family. As to quaternary structure, binds PLXNB3. In adult, detected in liver, brain, kidney, heart, lung and spleen.

It localises to the membrane. Functionally, bifunctional axonal guidance cue regulated by sulfated proteoglycans; attractive effects result from interactions with heparan sulfate proteoglycans (HSPGs), while the inhibitory effects depend on interactions with chondroitin sulfate proteoglycans (CSPGs). Ligand for receptor PLXNB3. In glioma cells, SEMA5A stimulation of PLXNB3 results in the disassembly of F-actin stress fibers, disruption of focal adhesions and cellular collapse as well as inhibition of cell migration and invasion through ARHGDIA-mediated inactivation of RAC1. May promote angiogenesis by increasing endothelial cell proliferation and migration and inhibiting apoptosis. The polypeptide is Semaphorin-5A (Sema5a) (Mus musculus (Mouse)).